A 269-amino-acid polypeptide reads, in one-letter code: Aquaporin-7 (269 aa).

At 1 to 20 (MAGSVLENIQSVLQKTWVRE) the chain is on the cytoplasmic side. Position 4 is a phosphoserine (S4). The chain crosses the membrane as a helical span at residues 21–38 (FLAEFLSTYVLMVFGLGS). Residues 39 to 51 (VAHMVLGERLGSY) lie on the Extracellular side of the membrane. Residues 52–69 (LGVNLGFGFGVTMGIHVA) form a helical membrane-spanning segment. At 70-73 (GGIS) the chain is on the cytoplasmic side. Positions 74-87 (GAHMNAAVTFTNCA) form an intramembrane region, discontinuously helical. An NPA 1 motif is present at residues 78–80 (NAA). Residues 88–95 (LGRMAWKK) lie on the Cytoplasmic side of the membrane. The chain crosses the membrane as a helical span at residues 96–116 (FPIYVLGQFLGSFLAAATTYL). At 117–151 (IFYGAINHYAGGELLVTGPKSTANIFATYLPEHMT) the chain is on the extracellular side. Residues 152-172 (LWRGFVDEVFVTGMLQLCIFA) form a helical membrane-spanning segment. The Cytoplasmic portion of the chain corresponds to 173 to 184 (ITDKLNSPALQG). Residues 185–201 (TEPLMIGILVCVLGVSL) traverse the membrane as a helical segment. The Extracellular segment spans residues 202–205 (GMNT). Residues 206 to 219 (GYAINPSRDLPPRF) constitute an intramembrane region (discontinuously helical). The NPA 2 signature appears at 210 to 212 (NPS). Topologically, residues 220–237 (FTFIAGWGKKVFSAGNNW) are extracellular. The helical transmembrane segment at 238–259 (WWVPVVAPLLGAYLGGIVYLGL) threads the bilayer. At 260-269 (IHAGIPPQGS) the chain is on the cytoplasmic side.

This sequence belongs to the MIP/aquaporin (TC 1.A.8) family. As to quaternary structure, homotetramer; each monomer provides an independent glycerol/water pore. Two homotetramers on opposing membranes can dimerize, forming a cell-cell junction. Interacts with PLIN1. Phosphorylation by PKA could prevent the interaction with PLIN1. In terms of tissue distribution, detected in heart, kidney and testis.

Its subcellular location is the cell membrane. The protein resides in the cytoplasmic vesicle membrane. The protein localises to the lipid droplet. The enzyme catalyses glycerol(in) = glycerol(out). It carries out the reaction H2O(in) = H2O(out). It catalyses the reaction urea(in) = urea(out). With respect to regulation, glycerol transport is regulated by pH, with the porin being permeable to glycerol at pH 7.4 but not at pH 5.5. Water permeability, however, is not influenced by pH. Not inhibited by mercury ions. Its function is as follows. Aquaglyceroporins form homotetrameric transmembrane channels, with each monomer independently mediating glycerol and water transport across the plasma membrane along their osmotic gradient. Could also be permeable to urea. Mediates the efflux of glycerol, formed upon triglyceride hydrolysis, to avoid its accumulation in adipocytes and to make it available to other tissues. In the kidney, mediates the reabsorption of glycerol, preventing its loss in urine, again participating to energy homeostasis. In pancreatic beta cells, it also mediates the efflux of glycerol, regulating its intracellular levels. This is Aquaporin-7 from Rattus norvegicus (Rat).